Reading from the N-terminus, the 229-residue chain is Heptaprenylglyceryl phosphate synthase (229 aa).

Lys-12 lines the sn-glycerol 1-phosphate pocket. Positions 14 and 40 each coordinate Mg(2+). Sn-glycerol 1-phosphate contacts are provided by residues 159–164 (YLEYSG), Gly-189, and 209–210 (GN).

It belongs to the GGGP/HepGP synthase family. Group I subfamily. Homodimer. Requires Mg(2+) as cofactor.

It catalyses the reaction sn-glycerol 1-phosphate + all-trans-heptaprenyl diphosphate = 3-heptaprenyl-sn-glycero-1-phosphate + diphosphate. It functions in the pathway membrane lipid metabolism; glycerophospholipid metabolism. Its function is as follows. Prenyltransferase that catalyzes in vivo the transfer of the heptaprenyl moiety of heptaprenyl pyrophosphate (HepPP; 35 carbon atoms) to the C3 hydroxyl of sn-glycerol-1-phosphate (G1P), producing heptaprenylglyceryl phosphate (HepGP). This reaction is an ether-bond-formation step in the biosynthesis of archaea-type G1P-based membrane lipids found in Bacillales. The sequence is that of Heptaprenylglyceryl phosphate synthase from Bacillus cereus (strain AH187).